Reading from the N-terminus, the 539-residue chain is G protein-coupled receptor associated sorting protein 3 (539 aa).

The segment covering 1-10 (MTGSKNKARA) has biased composition (basic residues). Disordered stretches follow at residues 1 to 112 (MTGS…NWFW) and 134 to 172 (VAKC…EENV). Composition is skewed to basic and acidic residues over residues 66-80 (VVAE…ESKA) and 88-106 (FNHR…DKPS). Polar residues predominate over residues 134 to 146 (VAKCENKPSTSIQ).

This sequence belongs to the GPRASP family. In terms of assembly, homodimer.

It is found in the cytoplasm. Its subcellular location is the nucleus. Survival and differentiation promoting protein that plays a role in the regulation of neurosynaptogenesis. Induces phosphatase PP2A activity which results in APP dephosphorylation and inhibits BACE1-mediated processing of APP. The sequence is that of G protein-coupled receptor associated sorting protein 3 (Gprasp3) from Mus musculus (Mouse).